The primary structure comprises 186 residues: UPF0301 protein NTHI0415 (186 aa).

The protein belongs to the UPF0301 (AlgH) family.

This Haemophilus influenzae (strain 86-028NP) protein is UPF0301 protein NTHI0415.